A 167-amino-acid chain; its full sequence is Large ribosomal subunit protein uL10 (167 aa).

Belongs to the universal ribosomal protein uL10 family. Part of the ribosomal stalk of the 50S ribosomal subunit. The N-terminus interacts with L11 and the large rRNA to form the base of the stalk. The C-terminus forms an elongated spine to which L12 dimers bind in a sequential fashion forming a multimeric L10(L12)X complex.

Forms part of the ribosomal stalk, playing a central role in the interaction of the ribosome with GTP-bound translation factors. The sequence is that of Large ribosomal subunit protein uL10 from Latilactobacillus sakei subsp. sakei (strain 23K) (Lactobacillus sakei subsp. sakei).